The sequence spans 342 residues: MKVEDFDFDLPEELIAQTPLLDRTSSRLMVLDKKSGEIKDQHFTDILSYLNEGDALVLNDTRVLPARLHGTKDETGAHIEVLLLKQKEGNAWETLVKPAKRIRKGGTITFGNGALKATCLEELEHGGRILEFSYEGIFYEVLEQLGEMPLPPYIKEQLADQDRYQTVYAKENGSAAAPTAGLHFTEDLLAQISAKGVEIIFVTLHVGLGTFRPVDVEDTANHKMHSEFYRLTEDAANRINKIKATGGKVVAVGTTSIRTLETIASHNEGKLVAESGWTDIFISPGYTFQAVDALITNLHLPKSTLIMLVSALSNRTNILAAYNHAVEQQYRFFSFGDAMFIH.

It belongs to the QueA family. Monomer.

Its subcellular location is the cytoplasm. The enzyme catalyses 7-aminomethyl-7-carbaguanosine(34) in tRNA + S-adenosyl-L-methionine = epoxyqueuosine(34) in tRNA + adenine + L-methionine + 2 H(+). It participates in tRNA modification; tRNA-queuosine biosynthesis. In terms of biological role, transfers and isomerizes the ribose moiety from AdoMet to the 7-aminomethyl group of 7-deazaguanine (preQ1-tRNA) to give epoxyqueuosine (oQ-tRNA). This chain is S-adenosylmethionine:tRNA ribosyltransferase-isomerase, found in Listeria welshimeri serovar 6b (strain ATCC 35897 / DSM 20650 / CCUG 15529 / CIP 8149 / NCTC 11857 / SLCC 5334 / V8).